The following is a 273-amino-acid chain: Urease accessory protein UreD (273 aa).

Belongs to the UreD family. In terms of assembly, ureD, UreF and UreG form a complex that acts as a GTP-hydrolysis-dependent molecular chaperone, activating the urease apoprotein by helping to assemble the nickel containing metallocenter of UreC. The UreE protein probably delivers the nickel.

The protein resides in the cytoplasm. Functionally, required for maturation of urease via the functional incorporation of the urease nickel metallocenter. The protein is Urease accessory protein UreD of Rhizobium leguminosarum bv. viciae.